A 227-amino-acid polypeptide reads, in one-letter code: Cytochrome c oxidase subunit 2 (227 aa).

Residues Met-1 to Ser-14 are Mitochondrial intermembrane-facing. A helical transmembrane segment spans residues Pro-15–Met-45. At Leu-46–Gln-59 the chain is on the mitochondrial matrix side. Residues Met-60–Thr-87 traverse the membrane as a helical segment. Residues Asp-88–Ser-227 lie on the Mitochondrial intermembrane side of the membrane. Cu cation contacts are provided by His-161, Cys-196, Glu-198, Cys-200, His-204, and Met-207. Glu-198 is a Mg(2+) binding site.

It belongs to the cytochrome c oxidase subunit 2 family. Component of the cytochrome c oxidase (complex IV, CIV), a multisubunit enzyme composed of 14 subunits. The complex is composed of a catalytic core of 3 subunits MT-CO1, MT-CO2 and MT-CO3, encoded in the mitochondrial DNA, and 11 supernumerary subunits COX4I, COX5A, COX5B, COX6A, COX6B, COX6C, COX7A, COX7B, COX7C, COX8 and NDUFA4, which are encoded in the nuclear genome. The complex exists as a monomer or a dimer and forms supercomplexes (SCs) in the inner mitochondrial membrane with NADH-ubiquinone oxidoreductase (complex I, CI) and ubiquinol-cytochrome c oxidoreductase (cytochrome b-c1 complex, complex III, CIII), resulting in different assemblies (supercomplex SCI(1)III(2)IV(1) and megacomplex MCI(2)III(2)IV(2)). Found in a complex with TMEM177, COA6, COX18, COX20, SCO1 and SCO2. Interacts with TMEM177 in a COX20-dependent manner. Interacts with COX20. Interacts with COX16. Cu cation is required as a cofactor.

The protein resides in the mitochondrion inner membrane. The catalysed reaction is 4 Fe(II)-[cytochrome c] + O2 + 8 H(+)(in) = 4 Fe(III)-[cytochrome c] + 2 H2O + 4 H(+)(out). Functionally, component of the cytochrome c oxidase, the last enzyme in the mitochondrial electron transport chain which drives oxidative phosphorylation. The respiratory chain contains 3 multisubunit complexes succinate dehydrogenase (complex II, CII), ubiquinol-cytochrome c oxidoreductase (cytochrome b-c1 complex, complex III, CIII) and cytochrome c oxidase (complex IV, CIV), that cooperate to transfer electrons derived from NADH and succinate to molecular oxygen, creating an electrochemical gradient over the inner membrane that drives transmembrane transport and the ATP synthase. Cytochrome c oxidase is the component of the respiratory chain that catalyzes the reduction of oxygen to water. Electrons originating from reduced cytochrome c in the intermembrane space (IMS) are transferred via the dinuclear copper A center (CU(A)) of subunit 2 and heme A of subunit 1 to the active site in subunit 1, a binuclear center (BNC) formed by heme A3 and copper B (CU(B)). The BNC reduces molecular oxygen to 2 water molecules using 4 electrons from cytochrome c in the IMS and 4 protons from the mitochondrial matrix. The chain is Cytochrome c oxidase subunit 2 (MT-CO2) from Galeopterus variegatus (Malayan flying lemur).